A 267-amino-acid chain; its full sequence is Phosphonates import ATP-binding protein PhnC 1 (267 aa).

One can recognise an ABC transporter domain in the interval 3–247 (LSLDGVDLVH…ALDALYANEQ (245 aa)). An ATP-binding site is contributed by 36–43 (GPSGAGKT).

It belongs to the ABC transporter superfamily. Phosphonates importer (TC 3.A.1.9.1) family. As to quaternary structure, the complex is composed of two ATP-binding proteins (PhnC), two transmembrane proteins (PhnE) and a solute-binding protein (PhnD).

Its subcellular location is the cell inner membrane. It carries out the reaction phosphonate(out) + ATP + H2O = phosphonate(in) + ADP + phosphate + H(+). Part of the ABC transporter complex PhnCDE involved in phosphonates import. Responsible for energy coupling to the transport system. This is Phosphonates import ATP-binding protein PhnC 1 from Pseudomonas aeruginosa (strain ATCC 15692 / DSM 22644 / CIP 104116 / JCM 14847 / LMG 12228 / 1C / PRS 101 / PAO1).